Consider the following 132-residue polypeptide: Fertilization-influencing membrane protein (132 aa).

The helical transmembrane segment at 100-120 (PGLFHHILVGLLVVAFFFLLF) threads the bilayer.

Testis-specific.

Its subcellular location is the cell membrane. Functionally, may play a role in sperm-oocyte fusion during fertilization. The sequence is that of Fertilization-influencing membrane protein from Homo sapiens (Human).